Here is a 436-residue protein sequence, read N- to C-terminus: Adenine nucleotide transporter BT1, chloroplastic/amyloplastic/mitochondrial (436 aa).

Positions 83–135 are disordered; it reads ASLAPPFPGSRPPGRRGRGSEEEEAEGRRHEEAAAAGRSEPEEGQGQDRQPAP. 3 Solcar repeats span residues 132–216, 227–311, and 324–412; these read QPAP…AKKF, IPIP…LKRL, and VGPV…CKKI. The next 6 membrane-spanning stretches (helical) occupy residues 137-158, 193-213, 229-247, 290-310, 327-347, and 384-405; these read RLVS…LETI, AVNV…YDTA, IPTP…TLCT, SLIG…TLKR, VATL…TFPL, and LYRG…AFMC. Residues 417–428 are compositionally biased toward acidic residues; the sequence is EDEEEEDEAGGG. The tract at residues 417-436 is disordered; sequence EDEEEEDEAGGGEDDKKKVE.

This sequence belongs to the mitochondrial carrier (TC 2.A.29) family. As to expression, highly expressed in silks and endosperm of developing kernels. Expressed at intermediate levels in tassels and lower levels in stems and leaves.

It is found in the plastid. The protein resides in the chloroplast inner membrane. It localises to the amyloplast inner membrane. Its subcellular location is the mitochondrion inner membrane. Inhibited by mersalyl. In terms of biological role, probable adenylate translocator that mediates transport of ADP-glucose into endosperm storage plastids during starch synthesis. Transports cytosolic ADP-glucose to amyloplast stroma by counter-exchange with ADP. The protein is Adenine nucleotide transporter BT1, chloroplastic/amyloplastic/mitochondrial (BT1) of Zea mays (Maize).